We begin with the raw amino-acid sequence, 1962 residues long: PIII-type proteinase (1962 aa).

A signal peptide spans 1 to 33; the sequence is MQRKKKGLSILLAGTVALGALAVLPVGEIQAKA. Positions 34–187 are excised as a propeptide; it reads AISQQTKGSS…VTLAKVYYPT (154 aa). Residues 191-697 enclose the Peptidase S8 domain; sequence ANSMANVQAV…AGLVDVKAAI (507 aa). Residues D217, H281, and S620 each act as charge relay system in the active site. The tract at residues 1796–1938 is disordered; that stretch reads GKGDGTTGTS…KTGETTERPA (143 aa). The segment covering 1797–1812 has biased composition (gly residues); the sequence is KGDGTTGTSDKGGGQG. 2 stretches are compositionally biased toward polar residues: residues 1856 to 1865 and 1890 to 1903; these read RNGQLTSGTS and SQPSSGGNIPTNPA. The LPXTG sorting signal motif lies at 1927 to 1931; that stretch reads LPKTG. T1930 carries the post-translational modification Pentaglycyl murein peptidoglycan amidated threonine. A propeptide spans 1931–1962 (removed by sortase); it reads GETTERPAFGFLGVIVVSLMGVLGLKRKQREE.

The protein belongs to the peptidase S8 family.

The protein resides in the secreted. It is found in the cell wall. The catalysed reaction is Endopeptidase activity with very broad specificity, although some subsite preference have been noted, e.g. large hydrophobic residues in the P1 and P4 positions, and Pro in the P2 position. Best known for its action on caseins, although it has been shown to hydrolyze hemoglobin and oxidized insulin B-chain.. Functionally, protease which breaks down milk proteins during the growth of the bacteria on milk. The polypeptide is PIII-type proteinase (prtP) (Lactococcus lactis subsp. cremoris (strain SK11)).